Reading from the N-terminus, the 115-residue chain is Splicing factor 3B subunit 6-like protein (115 aa).

An interaction with pre-mRNA branch site region spans residues 9-22 (EVNSILFIKNLSFK). The 76-residue stretch at 12–87 (SILFIKNLSF…RYLVVHYYNP (76 aa)) folds into the RRM domain.

The protein localises to the nucleus. Functionally, necessary for the splicing of pre-mRNA. The sequence is that of Splicing factor 3B subunit 6-like protein from Schizosaccharomyces pombe (strain 972 / ATCC 24843) (Fission yeast).